The sequence spans 354 residues: 3'-hydroxy-N-methyl-(S)-coclaurine 4'-O-methyltransferase 1 (354 aa).

Aspartate 223 serves as a coordination point for S-adenosyl-L-methionine. The Proton acceptor role is filled by histidine 261.

The protein belongs to the class I-like SAM-binding methyltransferase superfamily. Cation-independent O-methyltransferase family. COMT subfamily. As to expression, expressed in roots, stems, leaves and flowers. Restricted to sieve elements of the phloem adjacent or proximal to laticifers.

The catalysed reaction is (S)-3'-hydroxy-N-methylcoclaurine + S-adenosyl-L-methionine = (S)-reticuline + S-adenosyl-L-homocysteine + H(+). It functions in the pathway alkaloid biosynthesis; (S)-reticuline biosynthesis; (S)-reticuline from (S)-norcoclaurine: step 4/4. Its function is as follows. Involved in the biosynthesis of benzylisoquinoline alkaloids. Catalyzes the transfer of the methyl group to the 4'-hydroxyl group of 3'-hydroxy-N-methylcoclaurine to form reticuline. Also involved in the papaverine biosynthesis. This Papaver somniferum (Opium poppy) protein is 3'-hydroxy-N-methyl-(S)-coclaurine 4'-O-methyltransferase 1.